Here is a 335-residue protein sequence, read N- to C-terminus: Ribosomal RNA large subunit methyltransferase F (335 aa).

The protein belongs to the methyltransferase superfamily. METTL16/RlmF family.

The protein localises to the cytoplasm. It catalyses the reaction adenosine(1618) in 23S rRNA + S-adenosyl-L-methionine = N(6)-methyladenosine(1618) in 23S rRNA + S-adenosyl-L-homocysteine + H(+). Specifically methylates the adenine in position 1618 of 23S rRNA. This is Ribosomal RNA large subunit methyltransferase F from Yersinia enterocolitica serotype O:8 / biotype 1B (strain NCTC 13174 / 8081).